Here is a 122-residue protein sequence, read N- to C-terminus: Small ribosomal subunit protein uS13 (122 aa).

The disordered stretch occupies residues 93 to 122 (RRGLPVRGQRTKTNARTRKGPKKTIAGKKK).

The protein belongs to the universal ribosomal protein uS13 family. Part of the 30S ribosomal subunit. Forms a loose heterodimer with protein S19. Forms two bridges to the 50S subunit in the 70S ribosome.

Functionally, located at the top of the head of the 30S subunit, it contacts several helices of the 16S rRNA. In the 70S ribosome it contacts the 23S rRNA (bridge B1a) and protein L5 of the 50S subunit (bridge B1b), connecting the 2 subunits; these bridges are implicated in subunit movement. Contacts the tRNAs in the A and P-sites. The protein is Small ribosomal subunit protein uS13 of Corynebacterium jeikeium (strain K411).